An 853-amino-acid chain; its full sequence is Auxin response factor 23 (853 aa).

The interval 121-141 (KQQEDNGSTEEEVPSAPAAGH) is disordered. The TF-B3 DNA-binding region spans 149–251 (FCKTLTASDT…ELRVGVRRAM (103 aa)). Disordered regions lie at residues 422–471 (ESEP…NNTP) and 647–723 (PAKS…QGVS). The span at 425 to 455 (PNGTQRTFQTQENATPKSGFGNSSELESAQK) shows a compositional bias: polar residues. Positions 672–686 (EWRRPDVTEVEKCSD) are enriched in basic and acidic residues. The segment covering 706-723 (PSSQQASRNMSCKSQGVS) has biased composition (polar residues). In terms of domain architecture, PB1 spans 725–809 (RSCKKVHKQG…HKIFIYTREE (85 aa)). The segment at 815 to 853 (PGTLNSRSEDSHANSMERGSVGREMRGCLSTSSLNSENC) is disordered. Residues 843–853 (LSTSSLNSENC) show a composition bias toward polar residues.

The protein belongs to the ARF family. As to quaternary structure, homodimers and heterodimers.

The protein resides in the nucleus. Auxin response factors (ARFs) are transcriptional factors that bind specifically to the DNA sequence 5'-TGTCTC-3' found in the auxin-responsive promoter elements (AuxREs). This is Auxin response factor 23 (ARF23) from Oryza sativa subsp. indica (Rice).